A 201-amino-acid polypeptide reads, in one-letter code: MGAYKYLEELAKKKQSDVNLFLSRVRAWEYRQMNVIHRASRPSRPDKARRLGYKAKQGYVIYRIRVRRGGRKRPVPKGQTYGKPVHQGVNHLKYQRSARCTAEERVGRYCSNLRVLNSYWVNQDATYKFFEVILVDPSHKAIRRDPRINWIVNPVHKHRESRGLTSIGKKSRGIGKGHRYNNSPQHATWLRHNTLSLRRYR.

Residues 161-182 (SRGLTSIGKKSRGIGKGHRYNN) form a disordered region. Residues 169–179 (KKSRGIGKGHR) show a composition bias toward basic residues. The residue at position 183 (S183) is a Phosphoserine.

This sequence belongs to the eukaryotic ribosomal protein eL15 family. As to quaternary structure, component of the large ribosomal subunit (LSU). Mature yeast ribosomes consist of a small (40S) and a large (60S) subunit. The 40S small subunit contains 1 molecule of ribosomal RNA (18S rRNA) and at least 33 different proteins. The large 60S subunit contains 3 rRNA molecules (25S, 5.8S and 5S rRNA) and at least 46 different proteins.

The protein resides in the cytoplasm. Its subcellular location is the nucleus. The protein localises to the nucleolus. In terms of biological role, component of the ribosome, a large ribonucleoprotein complex responsible for the synthesis of proteins in the cell. The small ribosomal subunit (SSU) binds messenger RNAs (mRNAs) and translates the encoded message by selecting cognate aminoacyl-transfer RNA (tRNA) molecules. The large subunit (LSU) contains the ribosomal catalytic site termed the peptidyl transferase center (PTC), which catalyzes the formation of peptide bonds, thereby polymerizing the amino acids delivered by tRNAs into a polypeptide chain. The nascent polypeptides leave the ribosome through a tunnel in the LSU and interact with protein factors that function in enzymatic processing, targeting, and the membrane insertion of nascent chains at the exit of the ribosomal tunnel. The sequence is that of Large ribosomal subunit protein eL15B (rpl1502) from Schizosaccharomyces pombe (strain 972 / ATCC 24843) (Fission yeast).